The sequence spans 422 residues: Blood group Rh(D) polypeptide (422 aa).

The next 12 helical transmembrane spans lie at 13–33 (LPLWAFGLQVTFILLFYFLIG), 43–63 (FMAIYQVIQDLTLVAALGFGF), 76–96 (VAFSFFMLALGVQGTILLDYF), 113–135 (FLSIQRATISTLPLLISAGAVLG), 137–159 (VNLVQLAVMVLVEAMTFGAIRVA), 170–190 (IIMMYGHVFGAYFGLTVAWWL), 215–235 (LFAMLGTLFLWIFWPSINSAL), 244–266 (AVFNTYYALAVSTVTATSMSALS), 272–292 (INMVHIHNAVLAGGVAVGAPS), 294–314 (LISSPWIAMVLGLTAGLISIW), 335–355 (YTFGLPGLLGALTYYCLHIIA), and 372–392 (VGALSFAMAMGMVTGLLTGCL).

This sequence belongs to the ammonium transporter (TC 2.A.49) family. Rh subfamily. In terms of processing, palmitoylated.

Its subcellular location is the cell membrane. Its function is as follows. May be part of an oligomeric complex which is likely to have a transport or channel function in the erythrocyte membrane. In Rattus norvegicus (Rat), this protein is Blood group Rh(D) polypeptide (Rhd).